Consider the following 42-residue polypeptide: uncharacterized protein (42 aa).

Residues 20–42 (RSGRAERGVRAHSPAWSERPTPN) are disordered.

This is an uncharacterized protein from Escherichia coli.